We begin with the raw amino-acid sequence, 432 residues long: Metacaspase-1 (432 aa).

Low complexity-rich tracts occupy residues 1–14 and 29–59; these read MYPG…NNAG and QQYG…SQQY. Positions 1–70 are disordered; the sequence is MYPGSGRYTY…PPPGPPPMAY (70 aa). The segment covering 60–70 has biased composition (pro residues); that stretch reads APPPGPPPMAY. Catalysis depends on residues His-220 and Cys-276.

It belongs to the peptidase C14B family.

It localises to the cytoplasm. It is found in the nucleus. In terms of biological role, mediates cell death (apoptosis) triggered by oxygen stress, salt stress or chronological aging. Regulated cell death can prevent a release of toxic cellular components, thus avoiding necrotic collapse of the colony, and can also provide nutrients for healthy cells. Therefore, regulated cell death in yeast colonies can be as important for their development as are apoptosis and related processes that occur within metazoa. The polypeptide is Metacaspase-1 (MCA1) (Saccharomyces cerevisiae (strain YJM789) (Baker's yeast)).